The chain runs to 205 residues: MNQENFIRRYFIIGERRFSNYWWATVILIGSFGFLLTGISSYISTSLNSTALSSNIESQMQLPFFLSMLKNSNSTGAINFFPQGLLMCFYGSLGFLLSIYWWCLIFWNVGGGFNEFNKKENFIRIFRWGYPGKNRKIDLYYTLKDVESIRVEILQGFDSQRTIFLKLKGNREIPITGIGQPLTLQEIEKQASELANFLQVSLEGL.

2 helical membrane-spanning segments follow: residues 23-43 (WATV…SSYI) and 86-106 (LMCF…CLIF).

The protein belongs to the Ycf4 family.

The protein localises to the plastid. It localises to the chloroplast thylakoid membrane. In terms of biological role, seems to be required for the assembly of the photosystem I complex. The chain is Photosystem I assembly protein Ycf4 from Tetradesmus obliquus (Green alga).